A 212-amino-acid polypeptide reads, in one-letter code: MADLHRQLQDYLKQGKASRPAAAEPLLGAKAAEEPEAGAWLGSRVLRWPWAQSAAEPPPAGLRCLPSVTRGQRLVAGGLCLLLAALCFGLAALYAPVLLLRARKFALLWSLGSVLAWASAALLRGGPACGRLLRGEETPSRSTLGYAAALGATLYAALVLRSTVLTALGACAQVAALLYALIGLLPWGGVTALRLALGRLNRGTGLANALPV.

Residues methionine 1–glycine 78 are Cytoplasmic-facing. Residues leucine 79–leucine 99 traverse the membrane as a helical segment. Topologically, residues leucine 100–lysine 104 are lumenal. The helical transmembrane segment at phenylalanine 105–glycine 125 threads the bilayer. The Cytoplasmic portion of the chain corresponds to glycine 126–serine 142. The helical transmembrane segment at threonine 143–leucine 165 threads the bilayer. The Lumenal segment spans residues threonine 166 to valine 174. A helical membrane pass occupies residues alanine 175–leucine 197. Residues glycine 198–valine 212 are Cytoplasmic-facing.

Belongs to the SFT2 family.

It localises to the membrane. Its function is as follows. May be involved in fusion of retrograde transport vesicles derived from an endocytic compartment with the Golgi complex. The polypeptide is Vesicle transport protein SFT2C (Mus musculus (Mouse)).